Consider the following 516-residue polypeptide: GMP synthase [glutamine-hydrolyzing] (516 aa).

The Glutamine amidotransferase type-1 domain maps to 10–201 (KIIVLDFGSQ…AFDVCGAVAN (192 aa)). The active-site Nucleophile is the Cys-87. Catalysis depends on residues His-175 and Glu-177. The 190-residue stretch at 202 to 391 (WTMADFIDMQ…LGIPHDLVWR (190 aa)) folds into the GMPS ATP-PPase domain. Position 229 to 235 (229 to 235 (SGGVDSS)) interacts with ATP.

In terms of assembly, homodimer.

It carries out the reaction XMP + L-glutamine + ATP + H2O = GMP + L-glutamate + AMP + diphosphate + 2 H(+). It participates in purine metabolism; GMP biosynthesis; GMP from XMP (L-Gln route): step 1/1. Its function is as follows. Catalyzes the synthesis of GMP from XMP. This is GMP synthase [glutamine-hydrolyzing] from Lactobacillus acidophilus (strain ATCC 700396 / NCK56 / N2 / NCFM).